A 467-amino-acid polypeptide reads, in one-letter code: MDLHGCAKNQVDAELIIGIMENLSWKNTSDPDEADLIIVNSCGFINSAKEESINAVLQAKAAHPKAKVLLAGCLAERYADILKNDLPEADGIFGNGNLSLLPQLIDSMFPKKTSDEKFIEKTLVPPQIGICGGERPKILNFPRSTYIKITEGCDNFCSFCAIPIIRGRLRSRPIKDICDEIKTFLKKSFYEFNLIGQDLAAYQTGKDDLSEDELHRENCSGLALLLKSISKIKGNFKIRLLYIHPDHFPLDILPIMTADKRFLPYFDIPFQSGAQKIIRAMNRNGAAEVYLDIIKNIREAFEKTNSPYGEPQIRTTFLVGFPGETDEDFNETIKFLKELRPLWSGGFTYSREEDTPSYSFKGKVPKKTAEARLAEIQNAQTSITEKKLDSFIGKEIEVLVEELIQAEDKTFLALGRAWFQAPEVDGAVVLNFNLNKKDIDGNPIAPGSIVKARIAARNGFDLEAVAV.

The MTTase N-terminal domain maps to 1-110; sequence MDLHGCAKNQ…LPQLIDSMFP (110 aa). [4Fe-4S] cluster contacts are provided by cysteine 6, cysteine 42, cysteine 73, cysteine 153, cysteine 157, and cysteine 160. Positions 139–386 constitute a Radical SAM core domain; that stretch reads LNFPRSTYIK…QNAQTSITEK (248 aa). The 79-residue stretch at 389–467 folds into the TRAM domain; it reads DSFIGKEIEV…NGFDLEAVAV (79 aa).

The protein belongs to the methylthiotransferase family. RimO subfamily. The cofactor is [4Fe-4S] cluster.

It localises to the cytoplasm. The catalysed reaction is L-aspartate(89)-[ribosomal protein uS12]-hydrogen + (sulfur carrier)-SH + AH2 + 2 S-adenosyl-L-methionine = 3-methylsulfanyl-L-aspartate(89)-[ribosomal protein uS12]-hydrogen + (sulfur carrier)-H + 5'-deoxyadenosine + L-methionine + A + S-adenosyl-L-homocysteine + 2 H(+). Functionally, catalyzes the methylthiolation of an aspartic acid residue of ribosomal protein uS12. This Treponema denticola (strain ATCC 35405 / DSM 14222 / CIP 103919 / JCM 8153 / KCTC 15104) protein is Ribosomal protein uS12 methylthiotransferase RimO.